A 208-amino-acid polypeptide reads, in one-letter code: Small ribosomal subunit protein uS4 (208 aa).

An S4 RNA-binding domain is found at 97 to 158 (TRLDNVIYRM…RAQKYLCVQE (62 aa)).

Belongs to the universal ribosomal protein uS4 family. As to quaternary structure, part of the 30S ribosomal subunit. Contacts protein S5. The interaction surface between S4 and S5 is involved in control of translational fidelity.

One of the primary rRNA binding proteins, it binds directly to 16S rRNA where it nucleates assembly of the body of the 30S subunit. Functionally, with S5 and S12 plays an important role in translational accuracy. The polypeptide is Small ribosomal subunit protein uS4 (Xylella fastidiosa (strain M12)).